The following is a 130-amino-acid chain: uncharacterized protein (130 aa).

3 consecutive transmembrane segments (helical) span residues 34–54 (AILIIAFGAGIIYIVPYFAFF), 73–93 (LLLTAYGIVSLLFYIPGGWLA), and 107–127 (FGTGIITFWYFLVGLKGIVWI).

It is found in the cell membrane. This is an uncharacterized protein from Mycoplasma pneumoniae (strain ATCC 29342 / M129 / Subtype 1) (Mycoplasmoides pneumoniae).